A 485-amino-acid polypeptide reads, in one-letter code: Transcription factor ETV6 (485 aa).

Residues 1–10 (MSETPAQSSI) show a composition bias toward polar residues. The interval 1-32 (MSETPAQSSIKQERISYTPPESPVASHRSSTP) is disordered. An N6-acetyllysine; alternate modification is found at Lys11. Lys11 is covalently cross-linked (Glycyl lysine isopeptide (Lys-Gly) (interchain with G-Cter in SUMO2); alternate). Thr18 is subject to Phosphothreonine. Position 22 is a phosphoserine (Ser22). In terms of domain architecture, PNT spans 41–125 (ALRMEEDSIH…ELLQHILKQR (85 aa)). Residues 157–210 (NCVQRTPRTPAESVHHNPPTIELLHRPRSPITTNHRPSPDPEQQRPQRSPLDNM) are disordered. Thr165 is modified (phosphothreonine). Residues Ser215, Ser240, and Ser251 each carry the phosphoserine modification. Lys284 is covalently cross-linked (Glycyl lysine isopeptide (Lys-Gly) (interchain with G-Cter in SUMO2)). Lys298 carries the N6-acetyllysine; alternate modification. Lys298 is covalently cross-linked (Glycyl lysine isopeptide (Lys-Gly) (interchain with G-Cter in SUMO2); alternate). Residue Ser319 is modified to Phosphoserine. The ETS DNA-binding region spans 335–416 (RLLWDYVYQL…PGQRLLFRFM (82 aa)). Residues Lys399 and Lys417 each participate in a glycyl lysine isopeptide (Lys-Gly) (interchain with G-Cter in SUMO2) cross-link. Positions 440 to 485 (EQTYQEDEPTIASPVGWPRGNLPTGTAGGVMEAGELGVAVKEETRE) are disordered.

It belongs to the ETS family. As to quaternary structure, can form homodimers or heterodimers with TEL2 or FLI1. Interacts with L3MBTL1 and HDAC9.

Its subcellular location is the nucleus. Transcriptional repressor; binds to the DNA sequence 5'-CCGGAAGT-3'. Plays a role in hematopoiesis and malignant transformation. This Mus musculus (Mouse) protein is Transcription factor ETV6 (Etv6).